A 196-amino-acid polypeptide reads, in one-letter code: uncharacterized protein (196 aa).

This sequence to H.influenzae HI_0431.

This is an uncharacterized protein from Escherichia coli (strain K12).